Consider the following 139-residue polypeptide: MSIFPAQPSDKKAVEEGAAFMPRFDASGLITAIVTDARDGELLMVAHMNEEALRLTLETGIAHYWSRSRKTLWKKGETSGNLQSVVELRTDCDQDALWLKVHVAGDGPTCHTGRRSCFYRQVVSSGGKVALTMVSDHDQ.

Position 91 (Asp-91) interacts with Mg(2+). Cys-92 is a Zn(2+) binding site. Mg(2+) contacts are provided by Asp-93 and Asp-95. Cys-110 and Cys-117 together coordinate Zn(2+).

Belongs to the PRA-CH family. In terms of assembly, homodimer. It depends on Mg(2+) as a cofactor. Zn(2+) is required as a cofactor.

The protein resides in the cytoplasm. The catalysed reaction is 1-(5-phospho-beta-D-ribosyl)-5'-AMP + H2O = 1-(5-phospho-beta-D-ribosyl)-5-[(5-phospho-beta-D-ribosylamino)methylideneamino]imidazole-4-carboxamide. It participates in amino-acid biosynthesis; L-histidine biosynthesis; L-histidine from 5-phospho-alpha-D-ribose 1-diphosphate: step 3/9. Functionally, catalyzes the hydrolysis of the adenine ring of phosphoribosyl-AMP. This chain is Phosphoribosyl-AMP cyclohydrolase, found in Brucella canis (strain ATCC 23365 / NCTC 10854 / RM-666).